The primary structure comprises 213 residues: LIM domain-containing protein PLIM2c (213 aa).

2 consecutive LIM zinc-binding domains span residues 9–69 (DKCK…LFKE) and 105–165 (DKCA…LFLE). Residues 177–213 (ANHRRSTAEEDKTEPKEDEANPTEEETSDAAAEEHES) form a disordered region. Over residues 182–195 (STAEEDKTEPKEDE) the composition is skewed to basic and acidic residues.

Interacts with F-actin. Exclusively expressed in pollen grains.

Its subcellular location is the cytoplasm. It localises to the cytoskeleton. Functionally, binds to actin filaments and promotes cross-linking into thick bundles. Has an actin-stabilizing activity. Associates predominantly with long and dynamic actin bundles in the shank of growing pollen tubes. The actin regulatory activities are inhibited by pH &gt; 6.8 and/or high [Ca(2+)]. This Arabidopsis thaliana (Mouse-ear cress) protein is LIM domain-containing protein PLIM2c.